Reading from the N-terminus, the 4981-residue chain is Protocadherin Fat 4 (4981 aa).

An N-terminal signal peptide occupies residues 1–42 (MNLAANRAPGRRRLPLPSPSLCQLLRVWGLLSLLPGSARVQA). At 43 to 4505 (AEQRQVFQVM…PDEISLPLWA (4463 aa)) the chain is on the extracellular side. Cadherin domains are found at residues 44 to 135 (EQRQ…APVF), 136 to 250 (PDPS…PPVF), 251 to 353 (GSSH…DPVV), 359 to 475 (PATS…PPVF), 476 to 582 (EQQV…KPVF), 584 to 689 (QPEG…SPVF), 690 to 793 (YPVQ…PPVF), 794 to 893 (SQAA…APHF), 894 to 996 (LQAV…PPVF), 997 to 1100 (DQIS…RPLF), 1101 to 1210 (NSTN…APKF), 1211 to 1315 (LKDF…TPSF), 1316 to 1420 (PKST…PPSF), 1421 to 1529 (PPGD…VPMF), 1529 to 1629 (FISQ…GPVF), 1630 to 1740 (TQTK…PPVF), 1741 to 1841 (PTDT…TPRF), 1842 to 1944 (SRPV…PPVF), 1945 to 2051 (SMSS…PPMF), 2051 to 2154 (FLSP…NPVF), 2155 to 2259 (AQAM…VPVF), 2260 to 2364 (ELSP…VPTF), 2365 to 2468 (ANNM…PPRF), 2469 to 2569 (QHHP…FPKV), 2570 to 2671 (RAKE…APTF), 2672 to 2775 (EEDP…APRF), 2775 to 2874 (FSQI…TPRF), 2875 to 2985 (SRPS…PPQF), 2986 to 3091 (LQNK…TPEF), 3092 to 3196 (SQNH…SPVF), 3197 to 3300 (VPDE…VPRF), 3301 to 3406 (VSKL…PPVF), 3407 to 3512 (SLST…GPVL), and 3511 to 3622 (VLTV…VEIF). Residues asparagine 84 and asparagine 237 are each glycosylated (N-linked (GlcNAc...) asparagine). N-linked (GlcNAc...) asparagine glycosylation is found at asparagine 393, asparagine 416, asparagine 435, asparagine 483, asparagine 551, asparagine 615, asparagine 676, asparagine 721, asparagine 825, asparagine 880, asparagine 948, asparagine 1085, asparagine 1101, asparagine 1104, asparagine 1225, asparagine 1296, asparagine 1389, and asparagine 1514. 4 N-linked (GlcNAc...) asparagine glycosylation sites follow: asparagine 1828, asparagine 1899, asparagine 1967, and asparagine 2119. Residues asparagine 2387 and asparagine 2432 are each glycosylated (N-linked (GlcNAc...) asparagine). N-linked (GlcNAc...) asparagine glycosylation is found at asparagine 2923, asparagine 2939, asparagine 3038, asparagine 3142, asparagine 3219, asparagine 3394, and asparagine 3479. N-linked (GlcNAc...) asparagine glycans are attached at residues asparagine 3708 and asparagine 3760. One can recognise an EGF-like 1 domain in the interval 3804–3862 (DHDPCIHGPCQNGGSCLRRLAVGSALKIQESLPVIIVANEPLQPSQCKCVPGYAGSWCE). Intrachain disulfides connect cysteine 3808–cysteine 3819, cysteine 3813–cysteine 3850, cysteine 3852–cysteine 3861, cysteine 3868–cysteine 3879, cysteine 3873–cysteine 3888, cysteine 3890–cysteine 3899, cysteine 3906–cysteine 3917, cysteine 3911–cysteine 3926, cysteine 3928–cysteine 3937, cysteine 3944–cysteine 3955, cysteine 3949–cysteine 3964, and cysteine 3966–cysteine 3975. The EGF-like 2; calcium-binding domain maps to 3864 to 3900 (DIDECLPAPCHNGGTCHNLVGGFSCSCPEGFTGRACE). The EGF-like 3; calcium-binding domain occupies 3902–3938 (DINECLPSPCKHGAVCQNFPGGFNCVCKTGYTGKMCE). Positions 3940-3976 (SVNYCECNPCFNGGSCQSGVESYYCHCPFGVFGKHCE) constitute an EGF-like 4 domain. Residues 3977–4161 (LNSYGFEELS…LAAQGILDQC (185 aa)) enclose the Laminin G-like 1 domain. The N-linked (GlcNAc...) asparagine glycan is linked to asparagine 4019. 4 disulfides stabilise this stretch: cysteine 4135/cysteine 4161, cysteine 4168/cysteine 4179, cysteine 4173/cysteine 4188, and cysteine 4190/cysteine 4199. Residues 4164-4200 (LEGTCARNPCQHGGTCVDFWSWQQCQCMEGLTGKYCE) form the EGF-like 5 domain. The 181-residue stretch at 4219 to 4399 (YHMSQSEKRE…KTDPSVKIGC (181 aa)) folds into the Laminin G-like 2 domain. 2 N-linked (GlcNAc...) asparagine glycosylation sites follow: asparagine 4269 and asparagine 4314. 4 disulfides stabilise this stretch: cysteine 4366-cysteine 4399, cysteine 4431-cysteine 4442, cysteine 4436-cysteine 4452, and cysteine 4454-cysteine 4463. Residues 4427-4464 (PPGDCASHPCQNGGSCEPGLLSGYTCSCPESHTGRTCE) enclose the EGF-like 6 domain. Residues 4506–4526 (VPAIVGSCATALALLVLSLIL) traverse the membrane as a helical segment. The Cytoplasmic segment spans residues 4527 to 4981 (CNQCRGKMPK…AKDGEAEQYV (455 aa)). 5 disordered regions span residues 4535–4585 (PKNP…PDII), 4677–4713 (PSSY…KPSA), 4753–4773 (RRSK…SRLK), 4796–4911 (RLNT…PAAA), and 4957–4981 (AAGN…EQYV). Residues 4677–4701 (PSSYGQGLRTSSLSHSACPTPNPLS) show a composition bias toward polar residues. A necessary and sufficient for interaction with MPDZ region spans residues 4708–4797 (FSKPSAFYRN…GLSIEEVERL (90 aa)). Residues 4811–4823 (DHGRSSSEEDCRR) are compositionally biased toward basic and acidic residues. Serine 4878 is modified (phosphoserine). Over residues 4971-4981 (AAKDGEAEQYV) the composition is skewed to basic and acidic residues.

As to quaternary structure, heterophilic interaction with DCHS1; this interaction affects their respective protein levels. Interacts (via cytoplasmic domain) with MPDZ. Forms a complex with PALS1 and MPDZ. As to expression, widely expressed.

The protein localises to the membrane. Functionally, cadherins are cell-cell interaction molecules. FAT4 plays a role in the maintenance of planar cell polarity as well as in inhibition of YAP1-mediated neuroprogenitor cell proliferation and differentiation. This chain is Protocadherin Fat 4 (Fat4), found in Mus musculus (Mouse).